Reading from the N-terminus, the 256-residue chain is Ubiquinone/menaquinone biosynthesis C-methyltransferase UbiE (256 aa).

S-adenosyl-L-methionine contacts are provided by residues Thr79, Asp100, and 128 to 129 (DA).

The protein belongs to the class I-like SAM-binding methyltransferase superfamily. MenG/UbiE family.

The catalysed reaction is a 2-demethylmenaquinol + S-adenosyl-L-methionine = a menaquinol + S-adenosyl-L-homocysteine + H(+). It carries out the reaction a 2-methoxy-6-(all-trans-polyprenyl)benzene-1,4-diol + S-adenosyl-L-methionine = a 5-methoxy-2-methyl-3-(all-trans-polyprenyl)benzene-1,4-diol + S-adenosyl-L-homocysteine + H(+). It functions in the pathway quinol/quinone metabolism; menaquinone biosynthesis; menaquinol from 1,4-dihydroxy-2-naphthoate: step 2/2. Its pathway is cofactor biosynthesis; ubiquinone biosynthesis. Its function is as follows. Methyltransferase required for the conversion of demethylmenaquinol (DMKH2) to menaquinol (MKH2) and the conversion of 2-polyprenyl-6-methoxy-1,4-benzoquinol (DDMQH2) to 2-polyprenyl-3-methyl-6-methoxy-1,4-benzoquinol (DMQH2). This Pseudomonas aeruginosa (strain LESB58) protein is Ubiquinone/menaquinone biosynthesis C-methyltransferase UbiE.